The sequence spans 279 residues: Acyl-[acyl-carrier-protein]--UDP-N-acetylglucosamine O-acyltransferase (279 aa).

The disordered stretch occupies residues A260–S279.

This sequence belongs to the transferase hexapeptide repeat family. LpxA subfamily. In terms of assembly, homotrimer.

Its subcellular location is the cytoplasm. The catalysed reaction is a (3R)-hydroxyacyl-[ACP] + UDP-N-acetyl-alpha-D-glucosamine = a UDP-3-O-[(3R)-3-hydroxyacyl]-N-acetyl-alpha-D-glucosamine + holo-[ACP]. Its pathway is glycolipid biosynthesis; lipid IV(A) biosynthesis; lipid IV(A) from (3R)-3-hydroxytetradecanoyl-[acyl-carrier-protein] and UDP-N-acetyl-alpha-D-glucosamine: step 1/6. In terms of biological role, involved in the biosynthesis of lipid A, a phosphorylated glycolipid that anchors the lipopolysaccharide to the outer membrane of the cell. The polypeptide is Acyl-[acyl-carrier-protein]--UDP-N-acetylglucosamine O-acyltransferase (Chlamydia abortus (strain DSM 27085 / S26/3) (Chlamydophila abortus)).